The sequence spans 101 residues: Small ribosomal subunit protein uS14 (101 aa).

The protein belongs to the universal ribosomal protein uS14 family. As to quaternary structure, part of the 30S ribosomal subunit. Contacts proteins S3 and S10.

Binds 16S rRNA, required for the assembly of 30S particles and may also be responsible for determining the conformation of the 16S rRNA at the A site. This chain is Small ribosomal subunit protein uS14, found in Bordetella petrii (strain ATCC BAA-461 / DSM 12804 / CCUG 43448).